Reading from the N-terminus, the 76-residue chain is Potassium/proton antiporter CemA (76 aa).

Residues 35–52 traverse the membrane as a helical segment; it reads QILSCLVSIFPVILDTIF.

It belongs to the CemA family.

It is found in the plastid. Its subcellular location is the chloroplast inner membrane. It carries out the reaction K(+)(in) + H(+)(out) = K(+)(out) + H(+)(in). Contributes to K(+)/H(+) antiport activity by supporting proton efflux to control proton extrusion and homeostasis in chloroplasts in a light-dependent manner to modulate photosynthesis. Prevents excessive induction of non-photochemical quenching (NPQ) under continuous-light conditions. Indirectly promotes efficient inorganic carbon uptake into chloroplasts. The chain is Potassium/proton antiporter CemA from Vicia faba (Broad bean).